The following is a 379-amino-acid chain: MYQVDLPPDPKEVAAIEARRNQEREQQSRFFNVRTRVMGVDVEALNNQVEERKLQEATERSKEAAYGTNQVRYDLVAQMLEKEQAERTRRLAKKVQNFREQRQKLRNRCELDFWNSNQLWREFPAYLGDNAPYYGQASLQCFSGEDLERATYLRMQQEQFQYSLERQLQEQQQARVDENCADMLNDQLRLAMDMRAAQLAKLEESCRIAMMAATASANKAQAVKLAEQQGQEHQRQQEANLVEVQNQITSDLLTENPQVAQNPVAPHRVLPYCWKGMTPEQRATIRKVQETQHHEKEAQRQAEQALDAKWESQAINLAQAAKELEEQERELCAEFRRGLGSFNQQLAMEQNAQQNYLNSIIYTNQPTAQYHLQFNTSSR.

2 coiled-coil regions span residues 43–111 (EALN…RCEL) and 285–337 (IRKV…EFRR).

The protein belongs to the RIB43A family. In terms of assembly, microtubule inner protein component of sperm flagellar doublet microtubules.

Its subcellular location is the cytoplasm. The protein resides in the cytoskeleton. It localises to the flagellum axoneme. The protein is RIB43A-like with coiled-coils protein 1 (RIBC1) of Bos taurus (Bovine).